The primary structure comprises 334 residues: Tetratricopeptide repeat protein 24 (334 aa).

TPR repeat units follow at residues 35–68 (GPFY…CRQP), 72–105 (ATVL…HGSV), 112–145 (GRSF…AQDT), and 152–185 (WQAC…CQHE). Positions 220-258 (PGKLQTSRKAKTSARVQSSAEDAQESQWEGEASEGGHEK) are disordered. A compositionally biased stretch (polar residues) spans 233–246 (ARVQSSAEDAQESQ).

The protein is Tetratricopeptide repeat protein 24 (Ttc24) of Mus musculus (Mouse).